The sequence spans 364 residues: Alanine racemase (364 aa).

Lys-34 acts as the Proton acceptor; specific for D-alanine in catalysis. Lys-34 bears the N6-(pyridoxal phosphate)lysine mark. Arg-129 is a binding site for substrate. Catalysis depends on Tyr-259, which acts as the Proton acceptor; specific for L-alanine. Position 307 (Met-307) interacts with substrate.

Belongs to the alanine racemase family. Requires pyridoxal 5'-phosphate as cofactor.

It catalyses the reaction L-alanine = D-alanine. The protein operates within amino-acid biosynthesis; D-alanine biosynthesis; D-alanine from L-alanine: step 1/1. In terms of biological role, catalyzes the interconversion of L-alanine and D-alanine. May also act on other amino acids. This chain is Alanine racemase (alr), found in Coxiella burnetii (strain RSA 331 / Henzerling II).